The primary structure comprises 359 residues: Glycerol-1-phosphate dehydrogenase [NAD(P)+] (359 aa).

Residues 107 to 111 (GRVID) and 129 to 132 (TAAS) contribute to the NAD(+) site. A substrate-binding site is contributed by Asp-134. An NAD(+)-binding site is contributed by Ser-138. Asp-181 provides a ligand contact to substrate. Zn(2+) is bound by residues Asp-181 and His-261. His-265 is a binding site for substrate. His-277 serves as a coordination point for Zn(2+).

This sequence belongs to the glycerol-1-phosphate dehydrogenase family. The cofactor is Zn(2+).

Its subcellular location is the cytoplasm. The enzyme catalyses sn-glycerol 1-phosphate + NAD(+) = dihydroxyacetone phosphate + NADH + H(+). It carries out the reaction sn-glycerol 1-phosphate + NADP(+) = dihydroxyacetone phosphate + NADPH + H(+). It participates in membrane lipid metabolism; glycerophospholipid metabolism. Its function is as follows. Catalyzes the NAD(P)H-dependent reduction of dihydroxyacetonephosphate (DHAP or glycerone phosphate) to glycerol 1-phosphate (G1P). The G1P thus generated is used as the glycerophosphate backbone of phospholipids in the cellular membranes of Archaea. In Methanoregula boonei (strain DSM 21154 / JCM 14090 / 6A8), this protein is Glycerol-1-phosphate dehydrogenase [NAD(P)+].